A 443-amino-acid chain; its full sequence is MANVVVIGAQWGDEGKGKITDLLSKSADVVVRSQGGVNAGHTVVVQGQTFKLHLIPSGILYPDTECIIGSGTVIDPKVLLEEIDQLHRLNVSTENLFISQTAHVTMPYHRLIDGASEEMRGDRKIGTTGRGIGPTYADKSERTGVRVLDLMDLDNSQDKFVWAIKYKNVILEKLYDLPPLDPQEVIEEYRAYADALRPHVVDSSLKVFEGVNAKKNILFEGAQGTLLDIDHGTYPYVTSSNPIAGGACVGAGIGPTIIDRVIGVAKAYTTRVGEGPFPTELDDEIGELLGHVGAEFGTTTGRRRRCGWFDAVIGRYAARINGLDCLAITKLDVLDSLDEIKVCVAYEIDGEACEHFPSNANLFARCQPIYKTMPGWKQPTSDCRSLDELPKEALAYLKFLAELMDVPIAIVSLGAGREQTIIVEDPIHGPKRALLDRNGEPIG.

GTP-binding positions include 12–18 (GDEGKGK) and 40–42 (GHT). Asp-13 serves as the catalytic Proton acceptor. The Mg(2+) site is built by Asp-13 and Gly-40. Residues 13–16 (DEGK), 38–41 (NAGH), Thr-128, Arg-142, Gln-223, Thr-238, and Arg-302 each bind IMP. The Proton donor role is filled by His-41. 298-304 (TTTGRRR) is a binding site for substrate. Residues Arg-304, 330-332 (KLD), and 412-414 (SLG) each bind GTP.

The protein belongs to the adenylosuccinate synthetase family. Homodimer. The cofactor is Mg(2+).

It localises to the cytoplasm. The catalysed reaction is IMP + L-aspartate + GTP = N(6)-(1,2-dicarboxyethyl)-AMP + GDP + phosphate + 2 H(+). Its pathway is purine metabolism; AMP biosynthesis via de novo pathway; AMP from IMP: step 1/2. Plays an important role in the de novo pathway of purine nucleotide biosynthesis. Catalyzes the first committed step in the biosynthesis of AMP from IMP. This chain is Adenylosuccinate synthetase, found in Picosynechococcus sp. (strain ATCC 27264 / PCC 7002 / PR-6) (Agmenellum quadruplicatum).